The chain runs to 199 residues: Casparian strip membrane protein 1 (199 aa).

Topologically, residues 1 to 37 are cytoplasmic; sequence MKSESAAIDIPESSSVAKGKAPLIAVSRNEKGGYRKG. A helical membrane pass occupies residues 38–58; the sequence is IAIFDFILRLAAIATALAAAA. At 59-87 the chain is on the extracellular side; that stretch reads AMGTSDETLPFFTQFFQFQASYDDLPTFQ. A helical transmembrane segment spans residues 88–108; it reads FFVIAIAIVGGYLVLSLPFSI. Over 109–120 the chain is Cytoplasmic; it reads VAIVRPHAVGPR. The helical transmembrane segment at 121 to 141 threads the bilayer; that stretch reads LLLIILDAVALTLNTAAGAAA. Residues 142-173 lie on the Extracellular side of the membrane; that stretch reads AAIVYLAHNGNSNTNWLAICQQYGDFCQKVSG. Residues 174-194 form a helical membrane-spanning segment; that stretch reads AVVASFITVVIFVFLIVLSAF. The Cytoplasmic portion of the chain corresponds to 195–199; sequence ALRRH.

Belongs to the Casparian strip membrane proteins (CASP) family. Homodimer and heterodimers.

It localises to the cell membrane. Regulates membrane-cell wall junctions and localized cell wall deposition. Required for establishment of the Casparian strip membrane domain (CSD) and the subsequent formation of Casparian strips, a cell wall modification of the root endodermis that determines an apoplastic barrier between the intraorganismal apoplasm and the extraorganismal apoplasm and prevents lateral diffusion. The polypeptide is Casparian strip membrane protein 1 (Populus trichocarpa (Western balsam poplar)).